The chain runs to 376 residues: Chaperone protein DnaJ (376 aa).

A J domain is found at 5–69; it reads DYYEILGVDR…EKRARYDRFG (65 aa). The CR-type zinc-finger motif lies at 135-217; it reads GLETDIRVPH…CNGKGVVRKT (83 aa). Residues Cys-148, Cys-151, Cys-165, Cys-168, Cys-191, Cys-194, Cys-205, and Cys-208 each contribute to the Zn(2+) site. CXXCXGXG motif repeat units lie at residues 148–155, 165–172, 191–198, and 205–212; these read CPVCHGSR, CQTCGGSG, CPDCQGEG, and CSNCNGKG.

Belongs to the DnaJ family. Homodimer. It depends on Zn(2+) as a cofactor.

The protein localises to the cytoplasm. Functionally, participates actively in the response to hyperosmotic and heat shock by preventing the aggregation of stress-denatured proteins and by disaggregating proteins, also in an autonomous, DnaK-independent fashion. Unfolded proteins bind initially to DnaJ; upon interaction with the DnaJ-bound protein, DnaK hydrolyzes its bound ATP, resulting in the formation of a stable complex. GrpE releases ADP from DnaK; ATP binding to DnaK triggers the release of the substrate protein, thus completing the reaction cycle. Several rounds of ATP-dependent interactions between DnaJ, DnaK and GrpE are required for fully efficient folding. Also involved, together with DnaK and GrpE, in the DNA replication of plasmids through activation of initiation proteins. The protein is Chaperone protein DnaJ of Methanothermobacter thermautotrophicus (strain ATCC 29096 / DSM 1053 / JCM 10044 / NBRC 100330 / Delta H) (Methanobacterium thermoautotrophicum).